Here is a 118-residue protein sequence, read N- to C-terminus: Large ribosomal subunit protein uL18 (118 aa).

Belongs to the universal ribosomal protein uL18 family. Part of the 50S ribosomal subunit; part of the 5S rRNA/L5/L18/L25 subcomplex. Contacts the 5S and 23S rRNAs.

Functionally, this is one of the proteins that bind and probably mediate the attachment of the 5S RNA into the large ribosomal subunit, where it forms part of the central protuberance. This chain is Large ribosomal subunit protein uL18, found in Campylobacter jejuni subsp. doylei (strain ATCC BAA-1458 / RM4099 / 269.97).